The chain runs to 325 residues: Probable tRNA-dihydrouridine synthase 2 (325 aa).

18-20 (PME) contributes to the FMN binding site. The active-site Proton donor is the C105. Residues K143, 208–210 (NGD), and 232–233 (GR) each bind FMN.

The protein belongs to the Dus family. The cofactor is FMN.

It catalyses the reaction a 5,6-dihydrouridine in tRNA + NAD(+) = a uridine in tRNA + NADH + H(+). It carries out the reaction a 5,6-dihydrouridine in tRNA + NADP(+) = a uridine in tRNA + NADPH + H(+). In terms of biological role, catalyzes the synthesis of 5,6-dihydrouridine (D), a modified base found in the D-loop of most tRNAs, via the reduction of the C5-C6 double bond in target uridines. In Bacillus subtilis (strain 168), this protein is Probable tRNA-dihydrouridine synthase 2 (dus2).